Here is a 376-residue protein sequence, read N- to C-terminus: Succinyl-diaminopimelate desuccinylase 1 (376 aa).

His-67 lines the Zn(2+) pocket. The active site involves Asp-69. Zn(2+) is bound at residue Asp-100. Glu-134 functions as the Proton acceptor in the catalytic mechanism. Zn(2+) contacts are provided by Glu-135, Glu-163, and His-349.

The protein belongs to the peptidase M20A family. DapE subfamily. In terms of assembly, homodimer. Zn(2+) serves as cofactor. Co(2+) is required as a cofactor.

The catalysed reaction is N-succinyl-(2S,6S)-2,6-diaminopimelate + H2O = (2S,6S)-2,6-diaminopimelate + succinate. It functions in the pathway amino-acid biosynthesis; L-lysine biosynthesis via DAP pathway; LL-2,6-diaminopimelate from (S)-tetrahydrodipicolinate (succinylase route): step 3/3. Functionally, catalyzes the hydrolysis of N-succinyl-L,L-diaminopimelic acid (SDAP), forming succinate and LL-2,6-diaminopimelate (DAP), an intermediate involved in the bacterial biosynthesis of lysine and meso-diaminopimelic acid, an essential component of bacterial cell walls. This is Succinyl-diaminopimelate desuccinylase 1 from Shewanella loihica (strain ATCC BAA-1088 / PV-4).